The chain runs to 369 residues: Fructose-bisphosphate aldolase (369 aa).

D40 contributes to the dihydroxyacetone phosphate binding site. Positions 42 and 45 each coordinate D-glyceraldehyde 3-phosphate. R49 contributes to the beta-D-fructose 1,6-bisphosphate binding site. D-glyceraldehyde 3-phosphate is bound at residue K113. A dihydroxyacetone phosphate-binding site is contributed by K152. E195 serves as a coordination point for D-glyceraldehyde 3-phosphate. Catalysis depends on E195, which acts as the Proton acceptor. Dihydroxyacetone phosphate is bound by residues K237, S279, and G280. The Schiff-base intermediate with dihydroxyacetone phosphate role is filled by K237. Residues S279 to G281 and S307 contribute to the beta-D-fructose 1,6-bisphosphate site. Positions 309 and 310 each coordinate dihydroxyacetone phosphate. Position 310 (R310) interacts with beta-D-fructose 1,6-bisphosphate.

Belongs to the class I fructose-bisphosphate aldolase family. As to quaternary structure, homotetramer. Interacts with TRAP (via cytoplasmic domain); the interaction prevents substrate binding and thereby inhibits aldolase activity. Interacts with MTRAP (via cytoplasmic domain); MTRAP phosphorylation may increase the binding to FBPA. Interact with RH1 (via cytoplasmic domain). Interacts with RH2b (via cytoplasmic domain). Interacts with RH4 (via cytoplasmic domain). Interacts with AMA1 (via cytoplasmic domain); the interaction is weak, however it may be increased upon AMA1 phosphorylation. Interacts with EBA140 (via cytoplasmic domain); the interaction is weak. Interacts with EBA175 (via cytoplasmic domain); the interaction is weak. Interacts with EBA181 (via cytoplasmic domain); the interaction is weak. Interacts with G-actin and F-actin. May interact with ACT2/actin II; the interaction inhibits FBPA catalytic activity. Interacts with human SLC4A1/band 3 (via N-terminus); the interaction inhibits FBPA catalytic activity.

Its subcellular location is the cytoplasm. The protein resides in the membrane. It localises to the host cell membrane. The catalysed reaction is beta-D-fructose 1,6-bisphosphate = D-glyceraldehyde 3-phosphate + dihydroxyacetone phosphate. It functions in the pathway carbohydrate degradation; glycolysis; D-glyceraldehyde 3-phosphate and glycerone phosphate from D-glucose: step 4/4. With respect to regulation, the cytoplasmic tail of TRAP and probably other adhesins acts as a competitive inhibitor as the binding sites of the glycolytic substrate fructose 1,6-bisphosphate and TRAP partially overlap. Its function is as follows. Plays a key role in glycolysis by catalyzing the cleavage of fructose 1,6-bisphosphate into dihydroxyacetone phosphate and glyceraldehyde 3-phosphate. Independently of its catalytic activity, connects the actin filaments, and thus the actomyosin motor, to cell surface adhesins of the thrombospondin-related anonymous protein (TRAP), the erythrocyte binding ligand (EBL) and reticulocyte binding homolog (RH) protein families; this interaction is probably involved in transducing the motor force across the parasite surface required for sporozoite and ookinete gliding motility and merozoite invasion. Stimulates actin polymerisation. The protein is Fructose-bisphosphate aldolase of Plasmodium falciparum (isolate 3D7).